The primary structure comprises 461 residues: Vitamin K-dependent protein C (461 aa).

The first 18 residues, 1–18 (MWQLTSLLLFVATWGISG), serve as a signal peptide directing secretion. Residue Thr19 is glycosylated (O-linked (GalNAc...) threonine). The propeptide occupies 19-42 (TPAPLDSVFSSSERAHQVLRIRKR). Residues 43–88 (ANSFLEELRHSSLERECIEEICDFEEAKEIFQNVDDTLAFWSKHVD) form the Gla domain. 9 positions are modified to 4-carboxyglutamate: Glu48, Glu49, Glu56, Glu58, Glu61, Glu62, Glu67, Glu68, and Glu71. Cysteines 59 and 64 form a disulfide. Intrachain disulfides connect Cys92/Cys111, Cys101/Cys106, Cys105/Cys120, and Cys122/Cys131. 2 consecutive EGF-like domains span residues 97 to 132 (LEHP…RFCQ) and 136 to 176 (SFLN…LQCH). The residue at position 113 (Asp113) is a (3R)-3-hydroxyaspartate. The N-linked (GlcNAc...) asparagine glycan is linked to Asn139. 5 cysteine pairs are disulfide-bonded: Cys140–Cys151, Cys147–Cys160, Cys162–Cys175, Cys183–Cys319, and Cys238–Cys254. Positions 212–450 (LIDGKMTRRG…YLDWIHGHIR (239 aa)) constitute a Peptidase S1 domain. The active-site Charge relay system is the His253. A glycan (N-linked (GlcNAc...) asparagine) is linked at Asn290. Asp299 serves as the catalytic Charge relay system. Position 347 is a phosphoserine; by FAM20C (Ser347). Asn355 carries an N-linked (GlcNAc...) asparagine glycan. Asn371 is a glycosylation site (N-linked (GlcNAc...) asparagine; atypical; partial). 2 disulfides stabilise this stretch: Cys373–Cys387 and Cys398–Cys426. Catalysis depends on Ser402, which acts as the Charge relay system.

The protein belongs to the peptidase S1 family. In terms of assembly, synthesized as a single chain precursor, which is cleaved into a light chain and a heavy chain held together by a disulfide bond. The enzyme is then activated by thrombin, which cleaves a tetradecapeptide from the amino end of the heavy chain; this reaction, which occurs at the surface of endothelial cells, is strongly promoted by thrombomodulin. Interacts (activated) with iripin-8, a serine protease inhibitor from Ixodes ricinus saliva. In terms of processing, the vitamin K-dependent, enzymatic carboxylation of some Glu residues allows the modified protein to bind calcium. Post-translationally, N- and O-glycosylated. Partial (70%) N-glycosylation of Asn-371 with an atypical N-X-C site produces a higher molecular weight form referred to as alpha. The lower molecular weight form, not N-glycosylated at Asn-371, is beta. O-glycosylated with core 1 or possibly core 8 glycans. The iron and 2-oxoglutarate dependent 3-hydroxylation of aspartate and asparagine is (R) stereospecific within EGF domains. In terms of processing, may be phosphorylated on a Ser or Thr in a region (AA 25-30) of the propeptide. In terms of tissue distribution, plasma; synthesized in the liver.

The protein resides in the secreted. Its subcellular location is the golgi apparatus. The protein localises to the endoplasmic reticulum. It carries out the reaction Degradation of blood coagulation factors Va and VIIIa.. Functionally, protein C is a vitamin K-dependent serine protease that regulates blood coagulation by inactivating factors Va and VIIIa in the presence of calcium ions and phospholipids. Exerts a protective effect on the endothelial cell barrier function. This chain is Vitamin K-dependent protein C (PROC), found in Homo sapiens (Human).